The primary structure comprises 388 residues: Homeobox protein Hox-A13 (388 aa).

The segment at residues 322-381 is a DNA-binding region (homeobox); sequence GRKKRVPYTKVQLKELEREYATNKFITKDKRRRISATTNLSERQVTIWFQNRRVKEKKVI.

This sequence belongs to the Abd-B homeobox family. In terms of assembly, binds DNA as a homodimer. Interacts with MEIS1, MEIS2 and MEIS3.

It localises to the nucleus. Its function is as follows. Sequence-specific, AT-rich binding transcription factor which is part of a developmental regulatory system that provides cells with specific positional identities on the anterior-posterior axis. Sequence-specific transcription factor which is part of a developmental regulatory system that provides cells with specific positional identities on the anterior-posterior axis. The chain is Homeobox protein Hox-A13 (HOXA13) from Homo sapiens (Human).